Here is a 229-residue protein sequence, read N- to C-terminus: MAKKKAFTPLFYLASIVFLPWWISFSVNKCLESWVTNWWNTGQSEIFLNNIQEKSLLEKFIELEELLFLDEMVKEYSETHLEEFGIGIHKETIQLIKIQNENRIHTILHFSTNIICFIILSGYSILGNENLAILNSWAQEFLYNLSDTVKAFSILLLTDLCIGFHSPHGWELMIGSIYKDFGFVHSDQIISGLVSTFPVILDTIFKYWIFRYLNRLSPSLVVIYHSMND.

Helical transmembrane passes span 7–27 (FTPL…SFSV), 107–127 (ILHF…SILG), and 189–209 (IISG…KYWI).

The protein belongs to the CemA family.

It is found in the plastid. The protein localises to the chloroplast inner membrane. The catalysed reaction is K(+)(in) + H(+)(out) = K(+)(out) + H(+)(in). Functionally, contributes to K(+)/H(+) antiport activity by supporting proton efflux to control proton extrusion and homeostasis in chloroplasts in a light-dependent manner to modulate photosynthesis. Prevents excessive induction of non-photochemical quenching (NPQ) under continuous-light conditions. Indirectly promotes efficient inorganic carbon uptake into chloroplasts. In Nicotiana tomentosiformis (Tobacco), this protein is Potassium/proton antiporter CemA.